A 1104-amino-acid chain; its full sequence is Nitrite reductase [NAD(P)H] (1104 aa).

44 to 79 contributes to the FAD binding site; sequence QKIVVVGLGMVAVAFIEKLVKLDSERRKYDIVVIGE. 146–176 provides a ligand contact to NAD(+); the sequence is YDILVLATGSDAVLPTSTPGHDAKGIFVYRT. Positions 396–419 are disordered; that stretch reads KFLPGQRPSAESIGAADPNREEEP. Positions 500, 502, 535, and 538 each coordinate [2Fe-2S] cluster. [4Fe-4S] cluster contacts are provided by cysteine 720, cysteine 726, cysteine 760, and cysteine 764. Cysteine 764 is a siroheme binding site. The Rieske domain occupies 932–1040; it reads WQPVIKADYF…VEEREDGWIY (109 aa). Positions 976, 978, 1001, and 1004 each coordinate [2Fe-2S] cluster. A disordered region spans residues 1081-1104; it reads GKRAGAKGIEGSKPTRSPSNTIDW. The segment covering 1094–1104 has biased composition (polar residues); it reads PTRSPSNTIDW.

The protein belongs to the nitrite and sulfite reductase 4Fe-4S domain family. As to quaternary structure, homodimer. The cofactor is siroheme. [4Fe-4S] cluster serves as cofactor. Requires FAD as cofactor. [2Fe-2S] cluster is required as a cofactor.

The catalysed reaction is NH4(+) + 3 NADP(+) + 2 H2O = nitrite + 3 NADPH + 5 H(+). It carries out the reaction NH4(+) + 3 NAD(+) + 2 H2O = nitrite + 3 NADH + 5 H(+). It functions in the pathway nitrogen metabolism; nitrate reduction (assimilation). This chain is Nitrite reductase [NAD(P)H] (niiA), found in Emericella nidulans (strain FGSC A4 / ATCC 38163 / CBS 112.46 / NRRL 194 / M139) (Aspergillus nidulans).